A 244-amino-acid polypeptide reads, in one-letter code: MKHPPCSVVAAATAILAVVLAIGGCSTEGDAGKASDTAATASNGDAAMLLKQATDAMRKVTGMHVRLAVTGDVPNLRVTKLEGDISNTPQTVATGSATLLVGNKSEDAKFVYVDGHLYSDLGQPGTYTDFGNGTSIYNVSVLLDPNKGLANLLANLKDASVAGSQQADGVATTKITGNSSADDIATLAGSRLTSEDVKTVPTTVWIASDGSSHLVQIQIAPTKDTSVTLTMSDWGKQVTATKPV.

The first 24 residues, 1–24 (MKHPPCSVVAAATAILAVVLAIGG), serve as a signal peptide directing secretion. Cys25 carries N-palmitoyl cysteine lipidation. Residue Cys25 is the site of S-diacylglycerol cysteine attachment.

It belongs to the LppX/LprAFG lipoprotein family.

The protein localises to the cell membrane. The protein is Putative lipoprotein LprA (lprA) of Mycobacterium bovis (strain ATCC BAA-935 / AF2122/97).